A 264-amino-acid chain; its full sequence is Neurexophilin-2 (264 aa).

The N-terminal stretch at 1-22 is a signal peptide; that stretch reads MRLRPLPLVVVPGLLQLLFCDS. An II region spans residues 23-90; it reads KEVVHATEGL…WDWLANITEI (68 aa). Asn86, Asn139, Asn149, and Asn155 each carry an N-linked (GlcNAc...) asparagine glycan. Residues 91-169 form an III region; the sequence is QEPLARTKRR…LVPPSKVVEF (79 aa). The tract at residues 170-178 is IV (linker domain); the sequence is EVSPQSTLE. The tract at residues 179-264 is v (Cys-rich); it reads TKESKSFNCR…HSETPYLSSG (86 aa).

The protein belongs to the neurexophilin family. May be proteolytically processed at the boundary between the N-terminal non-conserved and the central conserved domain in neuron-like cells. In terms of tissue distribution, expressed in brain and kidney.

It is found in the secreted. May be signaling molecules that resemble neuropeptides and that act by binding to alpha-neurexins and possibly other receptors. This chain is Neurexophilin-2 (NXPH2), found in Homo sapiens (Human).